A 174-amino-acid chain; its full sequence is Shikimate kinase (174 aa).

15 to 20 (GTGKST) is an ATP binding site. Residue Ser19 participates in Mg(2+) binding. Residues Asp37, Arg61, and Gly82 each contribute to the substrate site. Position 120 (Arg120) interacts with ATP. Residue Arg138 participates in substrate binding.

This sequence belongs to the shikimate kinase family. In terms of assembly, monomer. Mg(2+) is required as a cofactor.

The protein localises to the cytoplasm. It catalyses the reaction shikimate + ATP = 3-phosphoshikimate + ADP + H(+). Its pathway is metabolic intermediate biosynthesis; chorismate biosynthesis; chorismate from D-erythrose 4-phosphate and phosphoenolpyruvate: step 5/7. Catalyzes the specific phosphorylation of the 3-hydroxyl group of shikimic acid using ATP as a cosubstrate. In Staphylococcus aureus (strain MRSA252), this protein is Shikimate kinase.